A 319-amino-acid polypeptide reads, in one-letter code: UPF0761 membrane protein PBPRA3489 (319 aa).

The next 6 helical transmembrane spans lie at 50–70 (LVPM…FAGL), 107–127 (VGIG…DHAL), 143–163 (FSIY…SIAV), 188–208 (ALPV…VPNL), 215–235 (ALLG…GFAL), and 249–269 (ALAV…IVLL).

Belongs to the UPF0761 family.

It localises to the cell inner membrane. The protein is UPF0761 membrane protein PBPRA3489 of Photobacterium profundum (strain SS9).